Here is a 225-residue protein sequence, read N- to C-terminus: Octanoyltransferase (225 aa).

Residues 42 to 219 (KNRQASMIFC…SICSALEYIN (178 aa)) enclose the BPL/LPL catalytic domain. Substrate is bound by residues 79-86 (RGGKITWH), 149-151 (AIG), and 162-164 (GFA). Cys180 functions as the Acyl-thioester intermediate in the catalytic mechanism.

It belongs to the LipB family.

The protein localises to the cytoplasm. The enzyme catalyses octanoyl-[ACP] + L-lysyl-[protein] = N(6)-octanoyl-L-lysyl-[protein] + holo-[ACP] + H(+). Its pathway is protein modification; protein lipoylation via endogenous pathway; protein N(6)-(lipoyl)lysine from octanoyl-[acyl-carrier-protein]: step 1/2. Functionally, catalyzes the transfer of endogenously produced octanoic acid from octanoyl-acyl-carrier-protein onto the lipoyl domains of lipoate-dependent enzymes. Lipoyl-ACP can also act as a substrate although octanoyl-ACP is likely to be the physiological substrate. This is Octanoyltransferase from Tropheryma whipplei (strain TW08/27) (Whipple's bacillus).